The chain runs to 817 residues: Leucine--tRNA ligase (817 aa).

The 'HIGH' region signature appears at Pro40 to His50. Residues Lys578–Ser582 carry the 'KMSKS' region motif. Lys581 serves as a coordination point for ATP.

This sequence belongs to the class-I aminoacyl-tRNA synthetase family.

The protein resides in the cytoplasm. It catalyses the reaction tRNA(Leu) + L-leucine + ATP = L-leucyl-tRNA(Leu) + AMP + diphosphate. In Caldicellulosiruptor saccharolyticus (strain ATCC 43494 / DSM 8903 / Tp8T 6331), this protein is Leucine--tRNA ligase.